Here is a 641-residue protein sequence, read N- to C-terminus: 1-deoxy-D-xylulose-5-phosphate synthase (641 aa).

Thiamine diphosphate contacts are provided by residues His-79 and 120–122; that span reads AHS. Asp-151 is a Mg(2+) binding site. Thiamine diphosphate contacts are provided by residues 152 to 153, Asn-180, Tyr-290, and Glu-372; that span reads GS. Residue Asn-180 participates in Mg(2+) binding.

It belongs to the transketolase family. DXPS subfamily. In terms of assembly, homodimer. The cofactor is Mg(2+). It depends on thiamine diphosphate as a cofactor.

The enzyme catalyses D-glyceraldehyde 3-phosphate + pyruvate + H(+) = 1-deoxy-D-xylulose 5-phosphate + CO2. Its pathway is metabolic intermediate biosynthesis; 1-deoxy-D-xylulose 5-phosphate biosynthesis; 1-deoxy-D-xylulose 5-phosphate from D-glyceraldehyde 3-phosphate and pyruvate: step 1/1. Functionally, catalyzes the acyloin condensation reaction between C atoms 2 and 3 of pyruvate and glyceraldehyde 3-phosphate to yield 1-deoxy-D-xylulose-5-phosphate (DXP). The sequence is that of 1-deoxy-D-xylulose-5-phosphate synthase from Rhodopseudomonas palustris (strain BisB18).